Consider the following 238-residue polypeptide: Ribonuclease PH (238 aa).

Phosphate-binding positions include arginine 86 and 124–126 (GTR).

It belongs to the RNase PH family. In terms of assembly, homohexameric ring arranged as a trimer of dimers.

It catalyses the reaction tRNA(n+1) + phosphate = tRNA(n) + a ribonucleoside 5'-diphosphate. Phosphorolytic 3'-5' exoribonuclease that plays an important role in tRNA 3'-end maturation. Removes nucleotide residues following the 3'-CCA terminus of tRNAs; can also add nucleotides to the ends of RNA molecules by using nucleoside diphosphates as substrates, but this may not be physiologically important. Probably plays a role in initiation of 16S rRNA degradation (leading to ribosome degradation) during starvation. This is Ribonuclease PH from Histophilus somni (strain 129Pt) (Haemophilus somnus).